A 1500-amino-acid chain; its full sequence is Rho GTPase-activating protein 35 (1500 aa).

The has GTPase activity, required for proper localization stretch occupies residues 1–266 (MMMARKQDVR…IPYFEALKQQ (266 aa)). Residues Lys28, 33 to 37 (IGKSC), Leu52, Ser56, 95 to 97 (EQT), 201 to 203 (KCD), and 229 to 231 (SAR) contribute to the GTP site. FF domains lie at 270–327 (IATA…HIHR), 368–422 (KLLE…HLEK), 429–483 (RAEM…HQKQ), and 485–550 (IDKA…HIHF). A Phosphotyrosine modification is found at Tyr308. Ser589 bears the Phosphoserine mark. Residues 592–767 (DPNIDRINLV…LLDSKRNLNL (176 aa)) form the pG1 pseudoGTPase domain. Phosphoserine occurs at positions 770 and 773. Residues 783-947 (RIVMCLMCGD…FKDVVDKKNI (165 aa)) form the pG2 pseudoGTPase domain. Ser970, Ser975, Ser985, Ser1002, and Ser1073 each carry phosphoserine. The tract at residues 970–989 (SPRAGSPLCNSNLQDSEEDI) is disordered. The interval 1058–1090 (SYLDQGHRDGQRKSVSSSTWLPPDGFDPSDYAE) is disordered. Tyr1088 is modified (phosphotyrosine). Tyr1106 carries the post-translational modification Phosphotyrosine; by ABL2 and PTK6. Over residues 1125–1142 (KAQSNGSGNGSDSEMDTS) the composition is skewed to polar residues. The interval 1125-1147 (KAQSNGSGNGSDSEMDTSSLERG) is disordered. Phosphoserine is present on residues Ser1135, Ser1143, Ser1151, Ser1177, Ser1180, and Ser1222. The disordered stretch occupies residues 1178–1208 (VGSDDELGPIRKKEEDQASQGYKGDNAVIPY). The interval 1214–1237 (PRRRNILRSLRRNTKKPKPKPRPS) is required for phospholipid binding and regulation of the substrate preference. Thr1227 bears the Phosphothreonine mark. Position 1237 is a phosphoserine (Ser1237). The region spanning 1250–1437 (VPLTTVVTPE…LFIQQCPFFF (188 aa)) is the Rho-GAP domain. The segment at 1444 to 1500 (EPPGATPSSPSAVASTVPFLTSTPVTSQPSPPQSPPPTPQSPMQALLPSQLQAEHTL) is disordered. The span at 1449–1471 (TPSSPSAVASTVPFLTSTPVTSQ) shows a compositional bias: low complexity. The span at 1472–1483 (PSPPQSPPPTPQ) shows a compositional bias: pro residues. Residues Ser1473 and Ser1477 each carry the phosphoserine modification. A Phosphothreonine modification is found at Thr1481. Position 1484 is a phosphoserine (Ser1484). Over residues 1490-1500 (LPSQLQAEHTL) the composition is skewed to polar residues.

As to quaternary structure, interacts with RASA1. Interacts with the general transcription factor GTF2I, the interaction sequesters GTF2I in the cytoplasm. Phosphorylation of Tyr-1106 by PTK6 promotes the association with RASA1, inactivating RHOA while activating RAS. Phosphorylation at Tyr-308 by PDGFRA inhibits binding to GTF2I. Phosphorylated by PRKCA at Ser-1222 and Thr-1227, induces relocalization from the cytoplasm to regions of plasma membrane ruffling and prevents the binding and substrate specificity regulation by phospholipids. In brain, phosphorylated by FYN and SRC. During focal adhesion formation, phosphorylated by MAPK1 and MAPK3 at the C-terminal region, probably at Ser-1452, Ser-1477, Thr-1481 and Ser-1484. Phosphorylation by MAPK1 and MAPK3 inhibits GAP function and localizes ARGHAP35 away from newly forming focal adhesions and stress fibers in cells spreading on fibronectin. Phosphorylation at Ser-1477 and Thr-1481 by GSK3B requires priming by MAPK and inhibits RhoGAP activity and modulates polarized cell migration. Strongly expressed in retina (photoreceptor layer) and brain. Expression is maximal in the occipital, frontal, temporal lobe and also the cerebellum. Medium expression in the medulla and also in kidney, lung, liver, heart and spleen.

Its subcellular location is the cytoplasm. It is found in the cytoskeleton. The protein localises to the cilium basal body. The protein resides in the nucleus. It localises to the cell membrane. Functionally, rho GTPase-activating protein (GAP). Binds several acidic phospholipids which inhibits the Rho GAP activity to promote the Rac GAP activity. This binding is inhibited by phosphorylation by PRKCA. Involved in cell differentiation as well as cell adhesion and migration, plays an important role in retinal tissue morphogenesis, neural tube fusion, midline fusion of the cerebral hemispheres and mammary gland branching morphogenesis. Transduces signals from p21-ras to the nucleus, acting via the ras GTPase-activating protein (GAP). Transduces SRC-dependent signals from cell-surface adhesion molecules, such as laminin, to promote neurite outgrowth. Regulates axon outgrowth, guidance and fasciculation. Modulates Rho GTPase-dependent F-actin polymerization, organization and assembly, is involved in polarized cell migration and in the positive regulation of ciliogenesis and cilia elongation. During mammary gland development, is required in both the epithelial and stromal compartments for ductal outgrowth. Represses transcription of the glucocorticoid receptor by binding to the cis-acting regulatory sequence 5'-GAGAAAAGAAACTGGAGAAACTC-3'; this function is however unclear and would need additional experimental evidences. The polypeptide is Rho GTPase-activating protein 35 (Canis lupus familiaris (Dog)).